An 874-amino-acid polypeptide reads, in one-letter code: Isopimaradiene synthase, chloroplastic (874 aa).

Polar residues predominate over residues 1–12 (MALPSSSLSSRI). Residues 1 to 20 (MALPSSSLSSRIPTGPHPLT) are disordered. The N-terminal 37 residues, 1–37 (MALPSSSLSSRIPTGPHPLTHTQCIPHFSTTINAGIS), are a transit peptide targeting the chloroplast. The Mg(2+) site is built by Asp407, Asp409, Asp626, Asp630, Asn770, and Glu778. Residues 407–410 (DIDD) carry the DXDD motif motif. Residues 626–630 (DDLYD) carry the DDXXD motif motif.

It belongs to the terpene synthase family. Tpsd subfamily. Mg(2+) is required as a cofactor. Requires Mn(2+) as cofactor.

The protein localises to the plastid. It is found in the chloroplast. It carries out the reaction (+)-copalyl diphosphate = isopimara-8(14),15-diene + diphosphate. The protein operates within terpene metabolism; oleoresin biosynthesis. Functionally, terpene synthase (TPS) involved in the biosynthesis of diterpene natural products included in conifer oleoresin secretions and volatile emissions; these compounds contribute to biotic and abiotic stress defense against herbivores and pathogens. Catalyzes the conversion of (+)-copalyl diphosphate ((+)-CPP) to isopimaradiene. The polypeptide is Isopimaradiene synthase, chloroplastic (Picea sitchensis (Sitka spruce)).